The following is a 29-amino-acid chain: Cyclotide mela-4 (29 aa).

The cyclopeptide (Gly-Asn) cross-link spans 1–29; that stretch reads GKPICGETCFKGKCYTPGCTCSYPICKKN. Disulfide bonds link C5/C19, C9/C21, and C14/C26.

This is a cyclic peptide. In terms of processing, contains 3 disulfide bonds.

Functionally, probably participates in a plant defense mechanism (Potential). Binds to and induces leakage in phospholipd membranes, particularly ones containing 1-palmitoyl-2-oleophosphatidylethanolamine (POPE). In vitro, displays cytotoxicity against cultured cells. Not active against Gram-negative bacterium E.coli ATCC 25922 or Gram-positive bacterium S.aureus ATCC 25923 up to a concentration of 64 uM. The chain is Cyclotide mela-4 from Melicytus latifolius (Norfolk Island mahoe).